Consider the following 311-residue polypeptide: Phospholipid phosphatase 3 (311 aa).

The Cytoplasmic portion of the chain corresponds to 1–33 (MQNYKYDKAIVPESKNGGSPALNNNPRRSGSKR). Phosphoserine is present on serine 19. Residues 34 to 54 (VLLICLDLFCLFMAGLPFLII) form a helical membrane-spanning segment. Residues 55-85 (ETSTIKPYHRGFYCNDESIKYPLKTGETIND) lie on the Extracellular side of the membrane. A helical membrane pass occupies residues 86 to 106 (AVLCAVGIVIAILAIITGEFY). Residues 107–122 (RIYYLKKSRSTIQNPY) lie on the Cytoplasmic side of the membrane. The Dityrosine basolateral targeting motif signature appears at 109-110 (YY). The chain crosses the membrane as a helical span at residues 123 to 143 (VAALYKQVGCFLFGCAISQSF). Topologically, residues 144 to 193 (TDIAKVSIGRLRPHFLSVCNPDFSQINCSEGYIQNYRCRGDDSKVQEARK) are extracellular. The segment at 148 to 156 (KVSIGRLRP) is phosphatase sequence motif I. Asparagine 170 carries N-linked (GlcNAc...) asparagine glycosylation. The short motif at 182–184 (RGD) is the Integrin-binding motif element. A helical membrane pass occupies residues 194-214 (SFFSGHASFSMYTMLYLVLYL). Residues 196 to 199 (FSGH) form a phosphatase sequence motif II region. Catalysis depends on histidine 199, which acts as the Proton donors. The Cytoplasmic segment spans residues 215 to 225 (QARFTWRGARL). The chain crosses the membrane as a helical span at residues 226–243 (LRPLLQFTLIMMAFYTGL). The phosphatase sequence motif III stretch occupies residues 244–255 (SRVSDHKHHPSD). Topologically, residues 244 to 257 (SRVSDHKHHPSDVL) are extracellular. Histidine 251 acts as the Nucleophile in catalysis. The helical transmembrane segment at 258 to 278 (AGFAQGALVACCIVFFVSDLF) threads the bilayer. Positions 275-311 (SDLFKTKTTLSLPAPAIRKEILSPVDIIDRNNHHNMM) are mediates interaction with CTNND1. Residues 279–311 (KTKTTLSLPAPAIRKEILSPVDIIDRNNHHNMM) lie on the Cytoplasmic side of the membrane.

The protein belongs to the PA-phosphatase related phosphoesterase family. Forms functional homodimers and homooligomers that are not required for substrate recognition and catalytic activity. Can also form heterooligomers with other PLPP2 and PLPP3. Interacts with CTNND1; negatively regulates the PLPP3-mediated stabilization of beta-catenin/CTNNB1. N-glycosylated. Contains high-mannose oligosaccharides. Ubiquitously expressed. Highly expressed in heart and placenta.

It localises to the cell membrane. The protein resides in the basolateral cell membrane. Its subcellular location is the endoplasmic reticulum membrane. The protein localises to the endoplasmic reticulum-Golgi intermediate compartment membrane. It is found in the golgi apparatus membrane. It localises to the golgi apparatus. The protein resides in the trans-Golgi network membrane. Its subcellular location is the membrane raft. The enzyme catalyses a 1,2-diacyl-sn-glycero-3-phosphate + H2O = a 1,2-diacyl-sn-glycerol + phosphate. It catalyses the reaction 1,2-dihexadecanoyl-sn-glycero-3-phosphate + H2O = 1,2-dihexadecanoyl-sn-glycerol + phosphate. The catalysed reaction is 1,2-di-(9Z-octadecenoyl)-sn-glycero-3-phosphate + H2O = 1,2-di-(9Z-octadecenoyl)-sn-glycerol + phosphate. It carries out the reaction a monoacyl-sn-glycero-3-phosphate + H2O = a monoacylglycerol + phosphate. The enzyme catalyses (9Z)-octadecenoyl-sn-glycero-3-phosphate + H2O = (9Z-octadecenoyl)-glycerol + phosphate. It catalyses the reaction sphing-4-enine 1-phosphate + H2O = sphing-4-enine + phosphate. The catalysed reaction is an N-acylsphing-4-enine 1-phosphate + H2O = an N-acylsphing-4-enine + phosphate. It carries out the reaction N-(octanoyl)-sphing-4-enine-1-phosphate + H2O = N-octanoylsphing-4-enine + phosphate. The enzyme catalyses N-(9Z-octadecenoyl)-ethanolamine phosphate + H2O = N-(9Z-octadecenoyl) ethanolamine + phosphate. The protein operates within lipid metabolism; phospholipid metabolism. Magnesium-independent phospholipid phosphatase. Insensitive to N-ethylmaleimide. Inhibited by sphingosine, zinc ions and modestly by propanolol. Functionally, magnesium-independent phospholipid phosphatase of the plasma membrane that catalyzes the dephosphorylation of a variety of glycerolipid and sphingolipid phosphate esters including phosphatidate/PA, lysophosphatidate/LPA, diacylglycerol pyrophosphate/DGPP, sphingosine 1-phosphate/S1P and ceramide 1-phosphate/C1P. Also acts on N-oleoyl ethanolamine phosphate/N-(9Z-octadecenoyl)-ethanolamine phosphate, a potential physiological compound. Has both an extracellular and an intracellular phosphatase activity, allowing the hydrolysis and the cellular uptake of these bioactive lipid mediators from the milieu, regulating signal transduction in different cellular processes. Through the dephosphorylation of extracellular sphingosine-1-phosphate and the regulation of its extra- and intracellular availability, plays a role in vascular homeostasis, regulating endothelial cell migration, adhesion, survival, proliferation and the production of pro-inflammatory cytokines. By maintaining the appropriate levels of this lipid in the cerebellum, also ensure its proper development and function. Through its intracellular lipid phosphatase activity may act in early compartments of the secretory pathway, regulating the formation of Golgi to endoplasmic reticulum retrograde transport carriers. Its function is as follows. Independently of this phosphatase activity may also function in the Wnt signaling pathway and the stabilization of beta-catenin/CTNNB1, thereby regulating cell proliferation, migration and differentiation in angiogenesis or yet in tumor growth. Also plays a role in integrin-mediated cell-cell adhesion in angiogenesis. The polypeptide is Phospholipid phosphatase 3 (Homo sapiens (Human)).